The sequence spans 325 residues: Leucine-rich repeat protein FLOR 1 (325 aa).

10 LRR repeats span residues 65 to 88 (NRRV…QIGD), 89 to 114 (LVDL…ITKL), 115 to 140 (KNLN…ELKS), 142 to 162 (TFLD…LSQM), 163 to 185 (PKLE…SFGS), 187 to 211 (VGNV…LSKY), 213 to 233 (FNAV…FFGR), 234 to 256 (NKTT…KVKF), 257 to 280 (ARSI…ALTK), and 281 to 305 (LHLE…LLQT).

It belongs to the polygalacturonase-inhibiting protein family. In terms of assembly, interacts with MADS domain transcription factors during flower development. Component of a complex made of FLOR1, VSP1 and AGAMOUS (AG). Binds directly with AG. In terms of tissue distribution, confined to flowers and inflorescences (e.g. inflorescence meristems, floral meristems, stamens and carpels).

Its subcellular location is the cytoplasm. The protein resides in the nucleus. It localises to the perinuclear region. The protein localises to the cell membrane. Its function is as follows. Promotes flowering transition in long days (LD). The protein is Leucine-rich repeat protein FLOR 1 of Arabidopsis thaliana (Mouse-ear cress).